We begin with the raw amino-acid sequence, 1353 residues long: Patatin-like phospholipase domain-containing protein ZK370.4 (1353 aa).

Residues 12–32 (IFLVTFIYNHVLLILFTVCII) form a helical membrane-spanning segment. Over residues 49–64 (TPSSASSSATPSSRNS) the composition is skewed to low complexity. Disordered stretches follow at residues 49–188 (TPSS…STAF) and 199–218 (SRSY…VRPP). The segment covering 91–123 (SPKSGTPTNTQTIEPPTSLNLNMVNSASGSNLS) has biased composition (polar residues). Composition is skewed to basic residues over residues 126 to 138 (RRMR…KKLY) and 170 to 184 (PRRR…RRRQ). Residues 245 to 372 (LKML…VITR), 444 to 581 (FGLV…VLRR), and 570 to 692 (IYLP…LGQY) each bind a nucleoside 3',5'-cyclic phosphate. Positions 942 to 1108 (LVLGGGGARG…VNNVPADVMR (167 aa)) constitute a PNPLA domain. A GXGXXG motif is present at residues 946-951 (GGGARG). Positions 973–977 (GTSIG) match the GXSXG motif. S975 (nucleophile) is an active-site residue. D1095 functions as the Proton acceptor in the catalytic mechanism. A DGA/G motif is present at residues 1095 to 1097 (DGG). 3 disordered regions span residues 1230–1249 (EKET…PDVS), 1274–1293 (SMSL…DHFL), and 1305–1353 (YEEE…PPSS). Low complexity predominate over residues 1328–1337 (GPPSSSSSGG).

It belongs to the NTE family.

The protein localises to the membrane. In Caenorhabditis elegans, this protein is Patatin-like phospholipase domain-containing protein ZK370.4.